The sequence spans 179 residues: GTP-dependent dephospho-CoA kinase (179 aa).

Residues aspartate 55, valine 57, aspartate 74, lysine 76, and glutamate 128 each coordinate GTP.

The protein belongs to the GTP-dependent DPCK family.

It catalyses the reaction 3'-dephospho-CoA + GTP = GDP + CoA + H(+). Its pathway is cofactor biosynthesis; coenzyme A biosynthesis. Its function is as follows. Catalyzes the GTP-dependent phosphorylation of the 3'-hydroxyl group of dephosphocoenzyme A to form coenzyme A (CoA). This is GTP-dependent dephospho-CoA kinase from Saccharolobus islandicus (strain M.16.4 / Kamchatka #3) (Sulfolobus islandicus).